Here is a 217-residue protein sequence, read N- to C-terminus: Glutathione S-transferase B (217 aa).

Residues 1–87 enclose the GST N-terminal domain; it reads PMTLGYWNIR…YIARKHNLCG (87 aa). Residues 6 to 7, 45 to 49, 58 to 59, and 71 to 72 contribute to the glutathione site; these read YW, WLNEK, NL, and QS. The GST C-terminal domain maps to 89–207; that stretch reads TEEETIRMDI…KSSRFLPKPL (119 aa). Tyrosine 115 serves as a coordination point for substrate.

This sequence belongs to the GST superfamily. Mu family. Homodimer.

The protein resides in the cytoplasm. The catalysed reaction is RX + glutathione = an S-substituted glutathione + a halide anion + H(+). The enzyme catalyses prostaglandin A2 + glutathione = prostaglandin A2-S-(R)-glutathione. It carries out the reaction prostaglandin J2 + glutathione = prostaglandin J2-S-(R)-glutathione. It catalyses the reaction prostaglandin J2 + glutathione = prostaglandin J2-S-(S)-glutathione. The catalysed reaction is prostaglandin A2 + glutathione = prostaglandin A2-S-(S)-glutathione. The enzyme catalyses 11(S)-hydroxy-14(S),15(S)-epoxy-(5Z,8Z,12E)-eicosatrienoate + glutathione = (11S,15S)-dihydroxy-14(R)-S-glutathionyl-(5Z,8Z,12E)-eicosatrienoate. In terms of biological role, conjugation of reduced glutathione to a wide number of exogenous and endogenous hydrophobic electrophiles. Involved in the formation of glutathione conjugates of both prostaglandin A2 (PGA2) and prostaglandin J2 (PGJ2). Participates in the formation of novel hepoxilin regioisomers. In Cavia porcellus (Guinea pig), this protein is Glutathione S-transferase B (GSTM1).